The following is a 294-amino-acid chain: 4-hydroxy-tetrahydrodipicolinate synthase (294 aa).

Position 45 (Thr-45) interacts with pyruvate. Tyr-133 serves as the catalytic Proton donor/acceptor. Lys-161 functions as the Schiff-base intermediate with substrate in the catalytic mechanism. Residue Ile-203 participates in pyruvate binding.

It belongs to the DapA family. As to quaternary structure, homotetramer; dimer of dimers.

Its subcellular location is the cytoplasm. The enzyme catalyses L-aspartate 4-semialdehyde + pyruvate = (2S,4S)-4-hydroxy-2,3,4,5-tetrahydrodipicolinate + H2O + H(+). It functions in the pathway amino-acid biosynthesis; L-lysine biosynthesis via DAP pathway; (S)-tetrahydrodipicolinate from L-aspartate: step 3/4. Functionally, catalyzes the condensation of (S)-aspartate-beta-semialdehyde [(S)-ASA] and pyruvate to 4-hydroxy-tetrahydrodipicolinate (HTPA). This Buchnera aphidicola subsp. Acyrthosiphon pisum (strain 5A) protein is 4-hydroxy-tetrahydrodipicolinate synthase.